A 286-amino-acid chain; its full sequence is Nucleotide-binding protein HAPS_0087 (286 aa).

ATP is bound at residue 8 to 15 (GRSGSGKS). 56–59 (DVRN) serves as a coordination point for GTP.

Belongs to the RapZ-like family.

Its function is as follows. Displays ATPase and GTPase activities. This Glaesserella parasuis serovar 5 (strain SH0165) (Haemophilus parasuis) protein is Nucleotide-binding protein HAPS_0087.